The primary structure comprises 1036 residues: Lethal(2) giant larvae protein homolog 1 (1036 aa).

WD repeat units follow at residues 38 to 71, 78 to 119, 139 to 175, 199 to 233, 239 to 271, 289 to 331, 339 to 373, 395 to 473, 517 to 592, and 601 to 662; these read SALAFDPELRIMAIGTRSGAVKIYGAPGVEFTGL, VTQM…GLSF, VTVVLLAAGDTVVLGTESGSIFFLDVATLALLEGQTL, SLQGHLQDPSKILIGYSRGLLVIWSQATQSVEHVF, LESLCWGRGGSNIISSHSDGSYAIWSTDTGSPP, AINK…ETLV, VIDFFTVHSTQPEDECDNPQALAVLLEEELVVLDL, TCSA…YKLS, QKVA…RMLI, and TAVT…LRQS. At Ser662 the chain carries Phosphoserine. Residues 667–677 are compositionally biased toward basic residues; that stretch reads RKSRVSGKKRT. Positions 667 to 688 are disordered; it reads RKSRVSGKKRTPAASSKLQEAN. A compositionally biased stretch (polar residues) spans 679–688; sequence AASSKLQEAN. WD repeat units lie at residues 722–782, 791–843, 848–901, and 915–938; these read VRCL…KEVQ, AIAV…VSAK, LTAH…VHYS, and VFTRHGQGFYLISPSEFERFSLSA. Residue Thr957 is modified to Phosphothreonine. A phosphoserine mark is found at Ser964, Ser982, and Ser989. The disordered stretch occupies residues 980–1002; it reads PESCEGSPSSAHSKRADTMEPPE.

It belongs to the WD repeat L(2)GL family. As to quaternary structure, associated with nonmuscle myosin II heavy chain. Interacts with PRKCI/aPKC, PARD6B/Par-6 and PARD6A. Interacts with STX4A. Interacts with RAB10 (GDP-bound form); the interaction is direct and promotes RAB10 association with membranes and activation through competition with the Rab inhibitor GDI1. Interacts with DCAF1. Post-translationally, phosphorylated by PRKCI. As to expression, widely expressed. Expressed in brain, ovary, testis, with moderate expression in lever, uterus, lung and kidney.

It localises to the early endosome membrane. The protein localises to the golgi apparatus. It is found in the trans-Golgi network membrane. Its subcellular location is the cell projection. The protein resides in the axon. It localises to the golgi apparatus membrane. The protein localises to the cytoplasm. It is found in the cytoskeleton. Cortical cytoskeleton protein found in a complex involved in maintaining cell polarity and epithelial integrity. Involved in the regulation of mitotic spindle orientation, proliferation, differentiation and tissue organization of neuroepithelial cells. Involved in axonogenesis through RAB10 activation thereby regulating vesicular membrane trafficking toward the axonal plasma membrane. This Bos taurus (Bovine) protein is Lethal(2) giant larvae protein homolog 1 (LLGL1).